We begin with the raw amino-acid sequence, 161 residues long: Nucleotide-binding protein HCH_04620 (161 aa).

Belongs to the YajQ family.

Its function is as follows. Nucleotide-binding protein. The protein is Nucleotide-binding protein HCH_04620 of Hahella chejuensis (strain KCTC 2396).